The primary structure comprises 282 residues: D-alanine aminotransferase (282 aa).

Residue Tyr-32 coordinates substrate. Arg-51 contacts pyridoxal 5'-phosphate. Residues Arg-99 and His-101 each coordinate substrate. Lys-146 serves as the catalytic Proton acceptor. The residue at position 146 (Lys-146) is an N6-(pyridoxal phosphate)lysine. Glu-178 is a pyridoxal 5'-phosphate binding site.

It belongs to the class-IV pyridoxal-phosphate-dependent aminotransferase family. As to quaternary structure, homodimer. It depends on pyridoxal 5'-phosphate as a cofactor.

The enzyme catalyses D-alanine + 2-oxoglutarate = D-glutamate + pyruvate. Functionally, acts on the D-isomers of alanine, leucine, aspartate, glutamate, aminobutyrate, norvaline and asparagine. The enzyme transfers an amino group from a substrate D-amino acid to the pyridoxal phosphate cofactor to form pyridoxamine and an alpha-keto acid in the first half-reaction. The second half-reaction is the reverse of the first, transferring the amino group from the pyridoxamine to a second alpha-keto acid to form the product D-amino acid via a ping-pong mechanism. This is an important process in the formation of D-alanine and D-glutamate, which are essential bacterial cell wall components. The polypeptide is D-alanine aminotransferase (dat) (Staphylococcus aureus (strain MSSA476)).